Consider the following 1488-residue polypeptide: Neuropathy target esterase sws (1488 aa).

The Lumenal portion of the chain corresponds to 1 to 34 (MDVLELLRASVNGCYNTLFSDAWSQYVSKQIATT). Residues 35–55 (TYWYGALLAIGALFIAWFLYF) traverse the membrane as a helical segment. Residues 56–1488 (KRLASLRLRD…ENVTEADTKN (1433 aa)) lie on the Cytoplasmic side of the membrane. 175-302 (IFGHFEKPIF…IRVIQVIMIR (128 aa)) contributes to the a nucleoside 3',5'-cyclic phosphate binding site. Disordered regions lie at residues 339 to 379 (PGPV…DPNP) and 402 to 440 (QQQQ…ATIT). Low complexity-rich tracts occupy residues 344–356 (SQAS…MASR) and 402–413 (QQQQSSGVSVGG). Positions 415–424 (HRSSGACTPT) are enriched in polar residues. A nucleoside 3',5'-cyclic phosphate-binding positions include 458–587 (ELGL…VVRR) and 576–703 (IVLD…LSHR). One can recognise a PNPLA domain in the interval 929–1095 (LVLGGGGARG…VNNLPGHLWR (167 aa)). Residues 933 to 938 (GGGARG) carry the GXGXXG motif. The GXSXG motif lies at 960–964 (GVSIG). Serine 962 acts as the Nucleophile in catalysis. Aspartate 1082 (proton acceptor) is an active-site residue. Residues 1082–1084 (DGG) carry the DGA/G motif. Residue serine 1176 is modified to Phosphoserine. Disordered stretches follow at residues 1348–1376 (RKVD…QGNL) and 1398–1488 (EHKR…DTKN). The span at 1399–1410 (HKRRQKSKHKRD) shows a compositional bias: basic residues. Positions 1440-1452 (IDAKLDQLRKLQQ) are enriched in basic and acidic residues. A compositionally biased stretch (acidic residues) spans 1456 to 1470 (QGNESEQEQEQEQEQ).

It belongs to the NTE family. As to quaternary structure, interacts with Pka-C3; interaction inhibits the catalytic function of Pka-C3 and the esterase activity of sws.

It is found in the endoplasmic reticulum membrane. It catalyses the reaction a 1-acyl-sn-glycero-3-phosphocholine + H2O = sn-glycerol 3-phosphocholine + a fatty acid + H(+). Phospholipase B that deacylates intracellular phosphatidylcholine (PtdCho), generating glycerophosphocholine (GroPtdCho). This deacylation occurs at both sn-2 and sn-1 positions of PtdCho. Its specific chemical modification by certain organophosphorus (OP) compounds leads to distal axonopathy. Plays a role in the signaling mechanism between neurons and glia that regulates glia wrapping during development of the adult brain. Essential for membrane lipid homeostasis and cell survival in both neurons and glia of the adult brain. This chain is Neuropathy target esterase sws, found in Drosophila mojavensis (Fruit fly).